Consider the following 122-residue polypeptide: MIQPQTLLNVADNSGAQKLMCIRIIGTGNHRYAHLGDVIVAVIKEAVPNMPLERSEIIRAVIVRTCKELKRDNGMIIRYDDNAAVIIDQEGNPKGTRIFGAIARELRQLNFTKIVSLAPEVL.

Belongs to the universal ribosomal protein uL14 family. Part of the 50S ribosomal subunit.

It is found in the plastid. It localises to the chloroplast. In terms of biological role, binds to 23S rRNA. This chain is Large ribosomal subunit protein uL14c, found in Phalaenopsis aphrodite subsp. formosana (Moth orchid).